The following is a 371-amino-acid chain: Peptide chain release factor 2 (371 aa).

At glutamine 252 the chain carries N5-methylglutamine.

It belongs to the prokaryotic/mitochondrial release factor family. Post-translationally, methylated by PrmC. Methylation increases the termination efficiency of RF2.

Its subcellular location is the cytoplasm. Functionally, peptide chain release factor 2 directs the termination of translation in response to the peptide chain termination codons UGA and UAA. The polypeptide is Peptide chain release factor 2 (Staphylococcus haemolyticus (strain JCSC1435)).